The primary structure comprises 155 residues: Ribosome maturation factor RimP (155 aa).

The protein belongs to the RimP family.

It localises to the cytoplasm. In terms of biological role, required for maturation of 30S ribosomal subunits. This is Ribosome maturation factor RimP from Synechococcus sp. (strain CC9902).